Here is a 305-residue protein sequence, read N- to C-terminus: Glycine--tRNA ligase alpha subunit (305 aa).

The protein belongs to the class-II aminoacyl-tRNA synthetase family. In terms of assembly, tetramer of two alpha and two beta subunits.

The protein localises to the cytoplasm. It catalyses the reaction tRNA(Gly) + glycine + ATP = glycyl-tRNA(Gly) + AMP + diphosphate. This Streptococcus pneumoniae (strain ATCC BAA-255 / R6) protein is Glycine--tRNA ligase alpha subunit.